A 125-amino-acid chain; its full sequence is MAISKEEVLEYIGSLSVLELSELVKMFEEKFGVSATPTVVAGAAVAGGAAAESEEKTEFNVILADSGAEKIKVIKVVREITGLGLKEAKDATEKTPHVLKEGVNKEEAETIKKKLEEVGAKVEVK.

It belongs to the bacterial ribosomal protein bL12 family. Homodimer. Part of the ribosomal stalk of the 50S ribosomal subunit. Forms a multimeric L10(L12)X complex, where L10 forms an elongated spine to which 2 to 4 L12 dimers bind in a sequential fashion. Binds GTP-bound translation factors.

In terms of biological role, forms part of the ribosomal stalk which helps the ribosome interact with GTP-bound translation factors. Is thus essential for accurate translation. In Helicobacter pylori (strain HPAG1), this protein is Large ribosomal subunit protein bL12.